A 298-amino-acid chain; its full sequence is 5,10-methylenetetrahydrofolate reductase (298 aa).

Glu-28 (proton donor/acceptor) is an active-site residue. Residue Thr-59 coordinates NADH. Residues Tyr-60, Ala-62, His-88, Arg-118, Gly-119, Asp-120, Ala-132, Tyr-152, His-156, Ala-159, Asp-165, Asn-168, and Lys-172 each contribute to the FAD site. Asp-120 serves as a coordination point for (6S)-5-methyl-5,6,7,8-tetrahydrofolate. Gln-183 lines the NADH pocket. The (6S)-5-methyl-5,6,7,8-tetrahydrofolate site is built by Gln-183, Gln-219, and Arg-279.

It belongs to the methylenetetrahydrofolate reductase family. The cofactor is FAD.

It catalyses the reaction (6S)-5-methyl-5,6,7,8-tetrahydrofolate + NAD(+) = (6R)-5,10-methylene-5,6,7,8-tetrahydrofolate + NADH + H(+). Its pathway is one-carbon metabolism; tetrahydrofolate interconversion. It participates in amino-acid biosynthesis; L-methionine biosynthesis via de novo pathway. Functionally, catalyzes the NADH-dependent reduction of 5,10-methylenetetrahydrofolate to 5-methyltetrahydrofolate. Is required to provide the methyl group necessary for methionine synthetase to convert homocysteine to methionine; the methyl group is given by 5-methyltetrahydrofolate. The protein is 5,10-methylenetetrahydrofolate reductase (metF) of Pectobacterium carotovorum subsp. carotovorum (Erwinia carotovora subsp. carotovora).